Here is a 173-residue protein sequence, read N- to C-terminus: MISYGRFNILGRELTIAIVWNNKGIQGITYSLDGIEFLEEQISRIINHLKSRNVRVNLSQEESEYPELVFMVLTGYVSNEEAFKELSLEGLTEFEIKVYSWLVKNVKRGEVITYGKVAKALKTSPLAIGGAMRRNPYPIIVPCHRVIGKRNKFLYTPKPSYKKFLLEVEGWTS.

The Nucleophile; methyl group acceptor role is filled by C143.

Belongs to the MGMT family.

It localises to the cytoplasm. The catalysed reaction is a 6-O-methyl-2'-deoxyguanosine in DNA + L-cysteinyl-[protein] = S-methyl-L-cysteinyl-[protein] + a 2'-deoxyguanosine in DNA. It catalyses the reaction a 4-O-methyl-thymidine in DNA + L-cysteinyl-[protein] = a thymidine in DNA + S-methyl-L-cysteinyl-[protein]. Its function is as follows. Involved in the cellular defense against the biological effects of O6-methylguanine (O6-MeG) and O4-methylthymine (O4-MeT) in DNA. Repairs the methylated nucleobase in DNA by stoichiometrically transferring the methyl group to a cysteine residue in the enzyme. This is a suicide reaction: the enzyme is irreversibly inactivated. This chain is Methylated-DNA--protein-cysteine methyltransferase, found in Pyrococcus sp. (strain NA2).